We begin with the raw amino-acid sequence, 76 residues long: Membrane protein UL43 homolog (76 aa).

2 helical membrane passes run A7 to F27 and I54 to I74.

The protein belongs to the alphaherpesvirinae HHV-1 UL43 family.

The protein resides in the membrane. This is Membrane protein UL43 homolog from Equus caballus (Horse).